A 556-amino-acid polypeptide reads, in one-letter code: Potassium-transporting ATPase potassium-binding subunit (556 aa).

Helical transmembrane passes span leucine 5–leucine 25, serine 65–glycine 85, glycine 133–valine 153, isoleucine 176–isoleucine 196, proline 249–proline 269, tyrosine 283–phenylalanine 303, alanine 377–valine 397, leucine 415–methionine 435, alanine 483–alanine 503, and phenylalanine 526–leucine 546.

Belongs to the KdpA family. The system is composed of three essential subunits: KdpA, KdpB and KdpC.

The protein localises to the cell membrane. Functionally, part of the high-affinity ATP-driven potassium transport (or Kdp) system, which catalyzes the hydrolysis of ATP coupled with the electrogenic transport of potassium into the cytoplasm. This subunit binds the extracellular potassium ions and delivers the ions to the membrane domain of KdpB through an intramembrane tunnel. This chain is Potassium-transporting ATPase potassium-binding subunit, found in Mycolicibacterium vanbaalenii (strain DSM 7251 / JCM 13017 / BCRC 16820 / KCTC 9966 / NRRL B-24157 / PYR-1) (Mycobacterium vanbaalenii).